The following is a 198-amino-acid chain: Dermorphin-2 (198 aa).

The signal sequence occupies residues M1–S20. Positions V21–M45 are excised as a propeptide. A disordered region spans residues E24–K198. Residue A49 is modified to D-alanine (Ala). Position 54 is a serine amide (S54). Basic and acidic residues predominate over residues E56 to E65. The propeptide occupies E56–M80. A D-alanine (Ala) modification is found at A84. S89 carries the serine amide modification. The propeptide occupies E91–M115. Over residues E100–H109 the composition is skewed to acidic residues. A119 bears the D-alanine (Ala) mark. A Serine amide modification is found at S124. Residues E126–E135 are compositionally biased toward basic and acidic residues. Positions E126 to M150 are excised as a propeptide. A154 carries the D-alanine (Ala) modification. Serine amide is present on S159. A propeptide spanning residues E161–M185 is cleaved from the precursor. Residues E170–H179 are compositionally biased toward acidic residues. Residue A189 is modified to D-alanine (Ala). Position 194 is a serine amide (S194). Residues E196–K198 constitute a propeptide that is removed on maturation.

It belongs to the frog skin active peptide (FSAP) family. Dermorphin subfamily. In terms of tissue distribution, expressed by the skin glands.

Its subcellular location is the secreted. Functionally, dermorphin has a very potent opiate-like activity. It has high affinity and selectivity for mu-type opioid receptors. The sequence is that of Dermorphin-2 from Phyllomedusa sauvagei (Sauvage's leaf frog).